Here is a 363-residue protein sequence, read N- to C-terminus: Phosphoserine aminotransferase (363 aa).

Arg-42 contributes to the L-glutamate binding site. The pyridoxal 5'-phosphate site is built by Trp-105, Thr-155, Asp-175, and Gln-198. An N6-(pyridoxal phosphate)lysine modification is found at Lys-199. Pyridoxal 5'-phosphate is bound at residue 240 to 241 (NT).

It belongs to the class-V pyridoxal-phosphate-dependent aminotransferase family. SerC subfamily. As to quaternary structure, homodimer. The cofactor is pyridoxal 5'-phosphate.

Its subcellular location is the cytoplasm. It carries out the reaction O-phospho-L-serine + 2-oxoglutarate = 3-phosphooxypyruvate + L-glutamate. The catalysed reaction is 4-(phosphooxy)-L-threonine + 2-oxoglutarate = (R)-3-hydroxy-2-oxo-4-phosphooxybutanoate + L-glutamate. It participates in amino-acid biosynthesis; L-serine biosynthesis; L-serine from 3-phospho-D-glycerate: step 2/3. The protein operates within cofactor biosynthesis; pyridoxine 5'-phosphate biosynthesis; pyridoxine 5'-phosphate from D-erythrose 4-phosphate: step 3/5. In terms of biological role, catalyzes the reversible conversion of 3-phosphohydroxypyruvate to phosphoserine and of 3-hydroxy-2-oxo-4-phosphonooxybutanoate to phosphohydroxythreonine. The sequence is that of Phosphoserine aminotransferase from Janthinobacterium sp. (strain Marseille) (Minibacterium massiliensis).